The sequence spans 150 residues: 3-dehydroquinate dehydratase (150 aa).

The active-site Proton acceptor is Tyr26. Residues Asn77, His83, and Asp90 each coordinate substrate. His103 acts as the Proton donor in catalysis. Residues 104-105 and Arg114 each bind substrate; that span reads LS.

It belongs to the type-II 3-dehydroquinase family. Homododecamer.

The enzyme catalyses 3-dehydroquinate = 3-dehydroshikimate + H2O. It functions in the pathway metabolic intermediate biosynthesis; chorismate biosynthesis; chorismate from D-erythrose 4-phosphate and phosphoenolpyruvate: step 3/7. Its function is as follows. Catalyzes a trans-dehydration via an enolate intermediate. In Pseudoalteromonas translucida (strain TAC 125), this protein is 3-dehydroquinate dehydratase.